Consider the following 347-residue polypeptide: Subtilase cytotoxin subunit A (347 aa).

An N-terminal signal peptide occupies residues 1–21 (MLKILWTYILFLLFISASARA). The 304-residue stretch at 24 to 327 (PWYFDAIGLT…GRVLNAEKAI (304 aa)) folds into the Peptidase S8 domain. Active-site charge relay system residues include Asp-52, His-89, and Ser-272. A disulfide bridge connects residues Cys-288 and Cys-331. Residues 322–347 (NAEKAISMFCKKNYIPVRQGRMSEEL) form an A2 domain region. A Prevents secretion from ER motif is present at residues 344–347 (SEEL).

Belongs to the peptidase S8 family. In terms of assembly, forms a complex with SubB with the stoichiometry SubA1:SubB5 (called SubAB5).

The protein resides in the secreted. Its subcellular location is the host cytoplasm. The protein localises to the host cytosol. It is found in the host endoplasmic reticulum lumen. In terms of biological role, protease subunit of subtilase cytotoxin SubAB5. An endoprotease specific for host endoplasmic reticulum (ER) chaperone BiP/HSPA5, has no activity on human HSP70 or HSPA8. Cleaves between 'Leu-416' and 'Leu-417' of BiP/HSPA5 in the hinge between BiP's ATPase and protein-binding domains. This induces host ER stress response and eventual cell death. Culture supernatant of E.coli expressing both subA and subB are toxic for Vero cells (African green monkey kidney cell line), Chinese hamster ovary cells and Hct-8 cells (human colonic epithelial cell line); the subunits are not toxic individually. Purified SubAB5 is highly toxic, &lt;0.1 pg is able to kill at least 50% of 30'000 Vero cells in a microtiter plate assay after 3 days; no cytotoxicity is seen at 24 hours. Preabsorption with cells expressing a ganglioside GM2 mimic reduced cytotoxicity of SubAB5 by 93% in the Vero cytotoxicity assay. Intraperitoneal injection of 200 ng of purified SubAB5 kills mice; the higher the dose the faster the mice die. Animals injected intraperitoneally with purified SubAB5 have microvascular thrombi in the brain and other organs, including the renal tubules and glomeruli. Injection induces an unfolded response in mice. Mice fed E.coli cells expressing cloned SubAB5 experience drastic weight loss and appear ill and lethargic. Protein synthesis in Vero cells is transiently inhibited by SubAB5; both subunits are required for this effect. Inhibition of protein synthesis is prevented by brefeldin A; cells are arrested in the G1 phase. SubAB5 at 100 ng/ml induced caspase-dependent apoptosis in Vero cells through mitochondrial membrane damage. The sequence is that of Subtilase cytotoxin subunit A from Escherichia coli.